We begin with the raw amino-acid sequence, 225 residues long: Elongation factor 1-beta (225 aa).

Positions 2 to 90 constitute a GST C-terminal domain; the sequence is GFGDLKTPAG…PSSVEDTTGS (89 aa). Residue Lys-7 is modified to N6-acetyllysine. Phosphoserine occurs at positions 42 and 83. A disordered region spans residues 73–115; sequence KKSLGKYGPSSVEDTTGSGAADAKDDDDIDLFGSDDEEESEEA. Position 88 is a phosphothreonine (Thr-88). Acidic residues predominate over residues 96 to 113; that stretch reads KDDDDIDLFGSDDEEESE. A Phosphoserine modification is found at Ser-106. A Glycyl lysine isopeptide (Lys-Gly) (interchain with G-Cter in SUMO2) cross-link involves residue Lys-147. Ser-174 is modified (phosphoserine).

Belongs to the EF-1-beta/EF-1-delta family. In terms of assembly, EF-1 is composed of 4 subunits: alpha, beta (alpha subunit of the eEF1B subcomplex), delta (beta subunit of the eEF1B subcomplex), and gamma (gamma subunit of the eEF1B subcomplex). Interacts with elongation factor EEF1A1. In terms of processing, phosphorylation affects the GDP/GTP exchange rate.

Its function is as follows. Catalytic subunit of the guanine nucleotide exchange factor (GEF) (eEF1B subcomplex) of the eukaryotic elongation factor 1 complex (eEF1). Stimulates the exchange of GDP for GTP on elongation factor 1A (eEF1A), probably by displacing GDP from the nucleotide binding pocket in eEF1A. The protein is Elongation factor 1-beta (Eef1b) of Mus musculus (Mouse).